We begin with the raw amino-acid sequence, 650 residues long: Zinc finger CCCH domain-containing protein 55 (650 aa).

A disordered region spans residues 67-162 (NSPSSTPTSP…THSGSADAAG (96 aa)). Positions 105–128 (SPSSPSSTSPWSFNNCINGNNGNN) are enriched in low complexity. Positions 141–154 (PFSSHQSNGLSATH) are enriched in polar residues. The segment at 232–254 (PCVYFSRGLCKNGESCKFIHGGY) adopts a C3H1-type zinc-finger fold. In terms of domain architecture, RRM spans 357-433 (RQIYLTFPAD…RVLVKPYKEK (77 aa)). A disordered region spans residues 566 to 650 (PVVNPMSVNN…PPVTTNNLMQ (85 aa)). The segment covering 581 to 590 (AKEETNKSEL) has biased composition (basic and acidic residues).

The protein is Zinc finger CCCH domain-containing protein 55 of Arabidopsis thaliana (Mouse-ear cress).